The sequence spans 342 residues: UDP-N-acetylglucosamine--N-acetylmuramyl-(pentapeptide) pyrophosphoryl-undecaprenol N-acetylglucosamine transferase (342 aa).

UDP-N-acetyl-alpha-D-glucosamine is bound by residues 10 to 12, Asn-124, Ser-177, and Gln-275; that span reads TGG.

The protein belongs to the glycosyltransferase 28 family. MurG subfamily.

The protein resides in the cell inner membrane. It carries out the reaction di-trans,octa-cis-undecaprenyl diphospho-N-acetyl-alpha-D-muramoyl-L-alanyl-D-glutamyl-meso-2,6-diaminopimeloyl-D-alanyl-D-alanine + UDP-N-acetyl-alpha-D-glucosamine = di-trans,octa-cis-undecaprenyl diphospho-[N-acetyl-alpha-D-glucosaminyl-(1-&gt;4)]-N-acetyl-alpha-D-muramoyl-L-alanyl-D-glutamyl-meso-2,6-diaminopimeloyl-D-alanyl-D-alanine + UDP + H(+). The protein operates within cell wall biogenesis; peptidoglycan biosynthesis. Its function is as follows. Cell wall formation. Catalyzes the transfer of a GlcNAc subunit on undecaprenyl-pyrophosphoryl-MurNAc-pentapeptide (lipid intermediate I) to form undecaprenyl-pyrophosphoryl-MurNAc-(pentapeptide)GlcNAc (lipid intermediate II). This chain is UDP-N-acetylglucosamine--N-acetylmuramyl-(pentapeptide) pyrophosphoryl-undecaprenol N-acetylglucosamine transferase, found in Campylobacter jejuni subsp. doylei (strain ATCC BAA-1458 / RM4099 / 269.97).